Reading from the N-terminus, the 524-residue chain is Probable cytochrome P450 519C1 (524 aa).

Residues 1-21 (MNILLLIFYFLVCFLIFDFIK) form a helical membrane-spanning segment. Cys-470 contacts heme.

This sequence belongs to the cytochrome P450 family. Heme is required as a cofactor.

Its subcellular location is the membrane. This chain is Probable cytochrome P450 519C1 (cyp519C1), found in Dictyostelium discoideum (Social amoeba).